Reading from the N-terminus, the 443-residue chain is ATP-dependent protease ATPase subunit HslU (443 aa).

ATP is bound by residues Ile18, 60–65 (GVGKTE), Asp256, Glu321, and Arg393.

It belongs to the ClpX chaperone family. HslU subfamily. As to quaternary structure, a double ring-shaped homohexamer of HslV is capped on each side by a ring-shaped HslU homohexamer. The assembly of the HslU/HslV complex is dependent on binding of ATP.

It localises to the cytoplasm. ATPase subunit of a proteasome-like degradation complex; this subunit has chaperone activity. The binding of ATP and its subsequent hydrolysis by HslU are essential for unfolding of protein substrates subsequently hydrolyzed by HslV. HslU recognizes the N-terminal part of its protein substrates and unfolds these before they are guided to HslV for hydrolysis. The sequence is that of ATP-dependent protease ATPase subunit HslU from Escherichia coli O17:K52:H18 (strain UMN026 / ExPEC).